Here is a 459-residue protein sequence, read N- to C-terminus: Argininosuccinate lyase (459 aa).

Belongs to the lyase 1 family. Argininosuccinate lyase subfamily.

The protein localises to the cytoplasm. The catalysed reaction is 2-(N(omega)-L-arginino)succinate = fumarate + L-arginine. It functions in the pathway amino-acid biosynthesis; L-arginine biosynthesis; L-arginine from L-ornithine and carbamoyl phosphate: step 3/3. The protein is Argininosuccinate lyase of Staphylococcus aureus (strain bovine RF122 / ET3-1).